A 478-amino-acid chain; its full sequence is 3-isopropylmalate dehydratase large subunit (478 aa).

The [4Fe-4S] cluster site is built by C359, C417, and C420.

It belongs to the aconitase/IPM isomerase family. LeuC type 1 subfamily. As to quaternary structure, heterodimer of LeuC and LeuD. [4Fe-4S] cluster is required as a cofactor.

The catalysed reaction is (2R,3S)-3-isopropylmalate = (2S)-2-isopropylmalate. Its pathway is amino-acid biosynthesis; L-leucine biosynthesis; L-leucine from 3-methyl-2-oxobutanoate: step 2/4. Catalyzes the isomerization between 2-isopropylmalate and 3-isopropylmalate, via the formation of 2-isopropylmaleate. This is 3-isopropylmalate dehydratase large subunit from Anaeromyxobacter sp. (strain Fw109-5).